The chain runs to 69 residues: Small ribosomal subunit protein bS21 (69 aa).

This sequence belongs to the bacterial ribosomal protein bS21 family.

This chain is Small ribosomal subunit protein bS21 (rpsU), found in Treponema pallidum (strain Nichols).